The sequence spans 494 residues: MELSVLLLLALLTGLLLLMARGHPKAYGHLPPGPRPLPILGNFLQMDRKGLLKSFLRLQEKYGDVFTVYLGPRRTVMLCGIDAIREALVDNAEAFSGRGKIAVVEPVFQGYGVVFANGERWKTLRRFSLATMRDFGMGKRSVEERIQEEAQCLVEELRKTEGVLQDPTFFFHSMTANIICSIVFGKRFGYKDPEFLRLMNLFYVSFALISSFSSQMFELFHSFLKYFPGTHRQVYNNLQEIKAFIARMVEKHRETLDPSAPRDFIDAYLIRMDKEKAEPSSEFHHRNLIDTALSLFFAGTETTSTTLRYGFLLMLKYPHIAERIYKEIDQVIGPHRLPSLDDRAKMPYTDAVIHEIQRFGDLLPIGVPHMVTKDICFRGYIIPKGTEVFPILHSALNDPHYFEKPDVFNPDHFLDANGALKKNEAFIPFSIGKRICLGEGIARMELFLFFTTILQNFSVASPMAPEDIDLTPQEIGVGKLPPVYQISFLSRGGC.

Ser-128 is modified (phosphoserine; by PKA). Residue Cys-436 coordinates heme.

It belongs to the cytochrome P450 family. It depends on heme as a cofactor.

It localises to the endoplasmic reticulum membrane. The protein resides in the microsome membrane. It carries out the reaction an organic molecule + reduced [NADPH--hemoprotein reductase] + O2 = an alcohol + oxidized [NADPH--hemoprotein reductase] + H2O + H(+). Cytochromes P450 are a group of heme-thiolate monooxygenases. In liver microsomes, this enzyme is involved in an NADPH-dependent electron transport pathway. This isozyme seems responsible for metabolism of 2,2',4,4',5,5'-hexachlorobiphenyl. The chain is Cytochrome P450 2B11 (CYP2B11) from Canis lupus familiaris (Dog).